Consider the following 305-residue polypeptide: MDPVLGLGLFAFALLLLALPLAFWKVSSEKTSGLVTLLIATANLALTAQLVLRWWQSGHFPISNLYESLCFLAWACTLTQLLVERSWPTPIVAAAATPMGLGCIAFASFALPDQLQEASPLVPALRSSWLVMHVSVIMVSYAALLVGSLLSVAVLVTDRGHALELRSSSIGSGGYRRAALATPLGNVGDSEVQLSSVKFTRNELLDSLSYRTITVGFLLLTVGIISGAVWANEAWGSYWSWDPKETWALICWLVYAAYLHTRLSRGWQGRRPALVASAGLVVIGVCYIGVNLLGIGLHSYGWFFG.

8 helical membrane-spanning segments follow: residues 4-24, 32-52, 58-78, 91-111, 136-156, 212-232, 246-263, and 275-295; these read VLGL…LAFW, SGLV…QLVL, GHFP…ACTL, IVAA…SFAL, VIMV…AVLV, TITV…VWAN, TWAL…HTRL, and VASA…LLGI.

It belongs to the CcmF/CycK/Ccl1/NrfE/CcsA family. As to quaternary structure, may interact with ccs1.

It is found in the cellular thylakoid membrane. Functionally, required during biogenesis of c-type cytochromes (cytochrome c6 and cytochrome f) at the step of heme attachment. In Synechococcus sp. (strain CC9311), this protein is Cytochrome c biogenesis protein CcsA.